The sequence spans 272 residues: Shikimate dehydrogenase (NADP(+)) (272 aa).

Shikimate contacts are provided by residues 14 to 16 and Thr61; that span reads SKS. Lys65 serves as the catalytic Proton acceptor. Glu77 is an NADP(+) binding site. Asn86 and Asp102 together coordinate shikimate. NADP(+) contacts are provided by residues 126–130, 149–154, and Met212; these read GAGGA and NRTADK. Position 214 (Tyr214) interacts with shikimate. NADP(+) is bound at residue Gly237.

Belongs to the shikimate dehydrogenase family. As to quaternary structure, homodimer.

The enzyme catalyses shikimate + NADP(+) = 3-dehydroshikimate + NADPH + H(+). Its pathway is metabolic intermediate biosynthesis; chorismate biosynthesis; chorismate from D-erythrose 4-phosphate and phosphoenolpyruvate: step 4/7. Functionally, involved in the biosynthesis of the chorismate, which leads to the biosynthesis of aromatic amino acids. Catalyzes the reversible NADPH linked reduction of 3-dehydroshikimate (DHSA) to yield shikimate (SA). This chain is Shikimate dehydrogenase (NADP(+)), found in Glaesserella parasuis serovar 5 (strain SH0165) (Haemophilus parasuis).